The following is an 811-amino-acid chain: Receptor-like protein 52 (811 aa).

The first 22 residues, 1–22 (MTFLPLLFIFFFLTSIPFPAFS), serve as a signal peptide directing secretion. The Extracellular portion of the chain corresponds to 23-770 (QYNDRSTLLN…EDEEEVMNWT (748 aa)). N-linked (GlcNAc...) asparagine glycosylation is found at N47, N64, N74, N93, N109, and N124. LRR repeat units lie at residues 62-86 (AGNV…ICNF), 87-110 (PNLK…LYNC), 112-134 (KLQY…INRL), 135-159 (APKL…IGRI), 161-183 (KLKV…IGDL), and 184-208 (SELE…EFGK). One copy of the LRR 7; degenerate repeat lies at 211 to 233 (KLKYMWLEEMNLIGEISAVVFEN). N-linked (GlcNAc...) asparagine glycans are attached at residues N233, N246, N260, N295, and N304. LRR repeat units follow at residues 234–258 (MTDL…LFGL), 260–281 (NLTE…SISA), 282–305 (KNLV…IGNL), 307–329 (NLEL…IGKL), 330–354 (PELK…GFIS), 356–377 (LERF…LCHG), 379–401 (KLQS…LGDC), and 403–427 (TLSS…TRSN). 6 N-linked (GlcNAc...) asparagine glycosylation sites follow: N389, N422, N429, N455, N464, and N485. 10 LRR repeats span residues 441–465 (LHSL…IANL), 466–489 (STLE…ISTS), 491–511 (KSID…LVRI), 512–537 (SSLE…SMQQ), 539–557 (QVLV…QNGF), 558–581 (SKLR…FFVN), 625–649 (LNTF…VGLL), 650–673 (KELH…MGNL), 674–697 (IELE…LGKL), and 699–722 (YLAY…QFQT). N525 carries N-linked (GlcNAc...) asparagine glycosylation. N571 and N581 each carry an N-linked (GlcNAc...) asparagine glycan. N656 carries an N-linked (GlcNAc...) asparagine glycan. The N-linked (GlcNAc...) asparagine glycan is linked to N704. A helical membrane pass occupies residues 771–791 (AAAIGSIPGISIGLTMGYILV). Residues 792-811 (SYKPEWLMNSGRNKRRIKPI) are Cytoplasmic-facing.

It belongs to the RLP family.

Its subcellular location is the cell membrane. In terms of biological role, required for defense against powdery mildew pathogen. The sequence is that of Receptor-like protein 52 from Arabidopsis thaliana (Mouse-ear cress).